The following is a 128-amino-acid chain: uncharacterized protein (128 aa).

3 consecutive transmembrane segments (helical) span residues 13 to 35 (FQMA…VFFV), 42 to 64 (IIAL…YNGG), and 90 to 112 (LVLT…SIIL).

Its subcellular location is the cell membrane. This is an uncharacterized protein from Methanocaldococcus jannaschii (strain ATCC 43067 / DSM 2661 / JAL-1 / JCM 10045 / NBRC 100440) (Methanococcus jannaschii).